Reading from the N-terminus, the 257-residue chain is NAD kinase (257 aa).

The Proton acceptor role is filled by Asp-44. NAD(+)-binding positions include 44-45 (DG), Arg-49, 116-117 (NE), Asp-146, Ala-154, and 157-162 (TAYNLS).

Belongs to the NAD kinase family. A divalent metal cation is required as a cofactor.

Its subcellular location is the cytoplasm. It carries out the reaction NAD(+) + ATP = ADP + NADP(+) + H(+). Involved in the regulation of the intracellular balance of NAD and NADP, and is a key enzyme in the biosynthesis of NADP. Catalyzes specifically the phosphorylation on 2'-hydroxyl of the adenosine moiety of NAD to yield NADP. The protein is NAD kinase of Rhizorhabdus wittichii (strain DSM 6014 / CCUG 31198 / JCM 15750 / NBRC 105917 / EY 4224 / RW1) (Sphingomonas wittichii).